Here is a 756-residue protein sequence, read N- to C-terminus: Inactive carboxypeptidase-like protein X2 (756 aa).

Residues 1 to 25 (MSRPGTATPALALVLLAVTLAGVGA) form the signal peptide. The disordered stretch occupies residues 51-131 (EPELETFSPP…DHSVRVARED (81 aa)). Over residues 68–78 (EWERRPQEPRP) the composition is skewed to basic and acidic residues. Over residues 79–90 (PKRATKPKKAPK) the composition is skewed to basic residues. The segment covering 113–131 (KSSEKAANDDHSVRVARED) has biased composition (basic and acidic residues). The F5/8 type C domain occupies 134-293 (ESCPPLGLET…ICMRMEILGC (160 aa)). C136 and C293 are joined by a disulfide. N231, N241, N281, N337, and N491 each carry an N-linked (GlcNAc...) asparagine glycan. One can recognise a Peptidase M14 domain in the interval 317–640 (KHHNYKEMRQ…ESLIVFMEQV (324 aa)).

It belongs to the peptidase M14 family.

The protein localises to the secreted. In terms of biological role, may be involved in cell-cell interactions. The polypeptide is Inactive carboxypeptidase-like protein X2 (CPXM2) (Homo sapiens (Human)).